The sequence spans 85 residues: ATP synthase subunit 9, mitochondrial (85 aa).

The next 2 membrane-spanning stretches (helical) occupy residues 19 to 39 and 61 to 81; these read IGAG…GNVF and ILGF…AFLI.

It belongs to the ATPase C chain family. F-type ATPases have 2 components, CF(1) - the catalytic core - and CF(0) - the membrane proton channel. CF(1) has five subunits: alpha(3), beta(3), gamma(1), delta(1), epsilon(1). CF(0) has three main subunits: a, b and c.

Its subcellular location is the mitochondrion membrane. Its function is as follows. This protein is one of the chains of the nonenzymatic membrane component (F0) of mitochondrial ATPase. In Arabidopsis thaliana (Mouse-ear cress), this protein is ATP synthase subunit 9, mitochondrial (ATP9).